The following is a 317-amino-acid chain: Transaldolase (317 aa).

Lysine 132 acts as the Schiff-base intermediate with substrate in catalysis.

It belongs to the transaldolase family. Type 1 subfamily. Homodimer.

It is found in the cytoplasm. It catalyses the reaction D-sedoheptulose 7-phosphate + D-glyceraldehyde 3-phosphate = D-erythrose 4-phosphate + beta-D-fructose 6-phosphate. It participates in carbohydrate degradation; pentose phosphate pathway; D-glyceraldehyde 3-phosphate and beta-D-fructose 6-phosphate from D-ribose 5-phosphate and D-xylulose 5-phosphate (non-oxidative stage): step 2/3. Functionally, transaldolase is important for the balance of metabolites in the pentose-phosphate pathway. The chain is Transaldolase from Histophilus somni (strain 2336) (Haemophilus somnus).